Here is a 299-residue protein sequence, read N- to C-terminus: Tyrosine recombinase XerC (299 aa).

In terms of domain architecture, Core-binding (CB) spans 1–85 (MQADLDAFLD…ALRGFYRYLL (85 aa)). The Tyr recombinase domain maps to 106 to 285 (RLPRTLDADR…DFQHLAAVYD (180 aa)). Active-site residues include Arg146, Lys170, His237, Arg240, and His263. Residue Tyr272 is the O-(3'-phospho-DNA)-tyrosine intermediate of the active site.

The protein belongs to the 'phage' integrase family. XerC subfamily. In terms of assembly, forms a cyclic heterotetrameric complex composed of two molecules of XerC and two molecules of XerD.

The protein resides in the cytoplasm. Site-specific tyrosine recombinase, which acts by catalyzing the cutting and rejoining of the recombining DNA molecules. The XerC-XerD complex is essential to convert dimers of the bacterial chromosome into monomers to permit their segregation at cell division. It also contributes to the segregational stability of plasmids. This Azotobacter vinelandii (strain DJ / ATCC BAA-1303) protein is Tyrosine recombinase XerC.